The chain runs to 88 residues: Exodeoxyribonuclease 7 small subunit (88 aa).

Positions 69-88 (DPMRPDDGEPFDPSIVSTSQ) are disordered.

It belongs to the XseB family. As to quaternary structure, heterooligomer composed of large and small subunits.

It is found in the cytoplasm. The catalysed reaction is Exonucleolytic cleavage in either 5'- to 3'- or 3'- to 5'-direction to yield nucleoside 5'-phosphates.. Functionally, bidirectionally degrades single-stranded DNA into large acid-insoluble oligonucleotides, which are then degraded further into small acid-soluble oligonucleotides. The polypeptide is Exodeoxyribonuclease 7 small subunit (Xylella fastidiosa (strain M12)).